The chain runs to 85 residues: Phosphoribosyl-AMP cyclohydrolase (85 aa).

Mg(2+) is bound at residue aspartate 48. Residue cysteine 49 coordinates Zn(2+). Residues aspartate 50 and aspartate 52 each contribute to the Mg(2+) site. 2 residues coordinate Zn(2+): cysteine 65 and cysteine 72.

Belongs to the PRA-CH family. In terms of assembly, homodimer. It depends on Mg(2+) as a cofactor. The cofactor is Zn(2+).

It is found in the cytoplasm. The enzyme catalyses 1-(5-phospho-beta-D-ribosyl)-5'-AMP + H2O = 1-(5-phospho-beta-D-ribosyl)-5-[(5-phospho-beta-D-ribosylamino)methylideneamino]imidazole-4-carboxamide. Its pathway is amino-acid biosynthesis; L-histidine biosynthesis; L-histidine from 5-phospho-alpha-D-ribose 1-diphosphate: step 3/9. Its function is as follows. Catalyzes the hydrolysis of the adenine ring of phosphoribosyl-AMP. This chain is Phosphoribosyl-AMP cyclohydrolase (hisI), found in Saccharolobus solfataricus (strain ATCC 35092 / DSM 1617 / JCM 11322 / P2) (Sulfolobus solfataricus).